Reading from the N-terminus, the 637-residue chain is ATP-dependent zinc metalloprotease FtsH (637 aa).

At 1-7 the chain is on the cytoplasmic side; that stretch reads MNRVFRN. Residues 8 to 28 form a helical membrane-spanning segment; the sequence is TIFYLLILLVVIGVVSYFQTS. Over 29-109 the chain is Extracellular; sequence NPKTENMSYS…VEPAQETSGW (81 aa). A helical membrane pass occupies residues 110-130; sequence VTFLTTIIPFVIIFILFFFLL. Topologically, residues 131-637 are cytoplasmic; sequence NQAQGGGSRV…TEEKKDDTKE (507 aa). 201 to 208 provides a ligand contact to ATP; it reads GPPGTGKT. Histidine 423 contributes to the Zn(2+) binding site. The active site involves glutamate 424. Residues histidine 427 and aspartate 499 each contribute to the Zn(2+) site. A not necessary for FtsH function region spans residues 514–637; it reads FGMSEKLGPL…TEEKKDDTKE (124 aa).

The protein in the central section; belongs to the AAA ATPase family. In the C-terminal section; belongs to the peptidase M41 family. As to quaternary structure, homohexamer. Interacts with FloT at midcell. Interacts with FloA at midcell. Another study shows only minor colocalization with FloA or FloT. Requires Zn(2+) as cofactor.

It is found in the cell membrane. The protein localises to the membrane raft. Its function is as follows. Acts as a processive, ATP-dependent zinc metallopeptidase for both cytoplasmic and membrane proteins. Plays a role in the quality control of integral membrane proteins. In terms of biological role, in vitro partially degrades Spo0E, the phosphatase that acts on Spo0A-P. Recognition requires the last 14 residues of Spo0E. Its stabile accumulation requires FlotA and Flot. May degrade EzrA. The polypeptide is ATP-dependent zinc metalloprotease FtsH (Bacillus subtilis (strain 168)).